The sequence spans 271 residues: Sulfur carrier protein adenylyltransferase (271 aa).

ATP is bound by residues Arg13, Gly40, Glu61, Arg72, Lys85, Leu109, and 129–133; that span reads DNFPT. Zn(2+) contacts are provided by Cys175 and Cys178. Cys192 is covalently cross-linked (Glycyl cysteine thioester (Cys-Gly) (interchain with G-Cter in TtuB)). Zn(2+) is bound by residues Cys249 and Cys252.

The protein belongs to the HesA/MoeB/ThiF family. It depends on Zn(2+) as a cofactor. In terms of processing, conjugated to TtuB via a covalent linkage that likely involves a lysine residue. Is able to form a covalent thioester adduct with TtuB via Cys-192 in vitro.

The catalysed reaction is [molybdopterin-synthase sulfur-carrier protein]-C-terminal Gly-Gly + ATP + H(+) = [molybdopterin-synthase sulfur-carrier protein]-C-terminal Gly-Gly-AMP + diphosphate. It catalyses the reaction [ThiS sulfur-carrier protein]-C-terminal Gly-Gly + ATP + H(+) = [ThiS sulfur-carrier protein]-C-terminal Gly-Gly-AMP + diphosphate. The enzyme catalyses [TtuB sulfur-carrier protein]-C-terminal Gly-Gly + ATP + H(+) = [TtuB sulfur-carrier protein]-C-terminal Gly-Gly-AMP + diphosphate. It functions in the pathway tRNA modification. It participates in cofactor biosynthesis; thiamine diphosphate biosynthesis. Its pathway is cofactor biosynthesis; molybdopterin biosynthesis. With respect to regulation, enzymatic activity may be regulated by TtuB conjugation. Adenylyltransferase involved in the biosynthesis of several sulfur compounds. Is required for the 2-thiolation of 5-methyluridine residue at position 54 in the T loop of tRNAs, leading to 5-methyl-2-thiouridine (m(5)s(2)U or s(2)T). This modification allows thermal stabilization of tRNAs in thermophilic microorganisms, and is essential for cell growth at high temperatures. TtuC catalyzes the adenylation by ATP of the carboxyl group of the C-terminal glycine of sulfur carrier protein TtuB. Is also involved in the biosynthesis of thiamine, molybdenum cofactor (Moco) and probably tungsten cofactor (Wco), by adenylating the sulfur carriers ThiS and MoaD. Is required for the conjugation of TtuB to target proteins. This chain is Sulfur carrier protein adenylyltransferase, found in Thermus thermophilus (strain ATCC BAA-163 / DSM 7039 / HB27).